Here is a 642-residue protein sequence, read N- to C-terminus: Transmembrane 9 superfamily member 4 (642 aa).

The first 23 residues, 1–23, serve as a signal peptide directing secretion; that stretch reads MATAMDWLPWSLLLFSLMCETSA. At 24–281 the chain is on the extracellular side; the sequence is FYVPGVAPIN…TMSDVQIHWF (258 aa). The helical transmembrane segment at 282–302 threads the bilayer; the sequence is SIINSVVVVFFLSGILSMIII. The Cytoplasmic portion of the chain corresponds to 303–346; it reads RTLRKDIANYNKEDDIEDTMEESGWKLVHGDVFRPPQYPMILSS. Residue Y312 is modified to Phosphotyrosine. A helical membrane pass occupies residues 347 to 367; it reads LLGSGIQLFCMILIVIFVAML. Over 368 to 376 the chain is Extracellular; that stretch reads GMLSPSSRG. The chain crosses the membrane as a helical span at residues 377-397; the sequence is ALMTTACFLFMFMGVFGGFSA. The Cytoplasmic portion of the chain corresponds to 398–416; sequence GRLYRTLKGHRWKKGAFCT. The chain crosses the membrane as a helical span at residues 417 to 437; it reads ATLYPGVVFGICFVLNCFIWG. At 438–449 the chain is on the extracellular side; the sequence is KHSSGAVPFPTM. Residues 450–470 traverse the membrane as a helical segment; the sequence is VALLCMWFGISLPLVYLGYYF. Over 471–501 the chain is Cytoplasmic; the sequence is GFRKQPYDNPVRTNQIPRQIPEQRWYMNRFV. A helical transmembrane segment spans residues 502 to 522; it reads GILMAGILPFGAMFIELFFIF. At 523–535 the chain is on the extracellular side; it reads SAIWENQFYYLFG. A helical transmembrane segment spans residues 536 to 556; the sequence is FLFLVFIILVVSCSQISIVMV. At 557 to 570 the chain is on the cytoplasmic side; that stretch reads YFQLCAEDYRWWWR. The helical transmembrane segment at 571 to 591 threads the bilayer; that stretch reads NFLVSGGSAFYVLVYAIFYFV. The Extracellular portion of the chain corresponds to 592-598; it reads NKLDIVE. The helical transmembrane segment at 599–619 threads the bilayer; sequence FIPSLLYFGYTALMVLSFWLL. Residues 620-642 lie on the Cytoplasmic side of the membrane; sequence TGTIGFYAAYMFVRKIYAAVKID.

The protein belongs to the nonaspanin (TM9SF) (TC 9.A.2) family. Interacts with ATP6V1H in colon cancer cells. In terms of tissue distribution, highly expressed in metastatic melanoma cells whereas it is undetectable in primary melanoma cells, healthy skin tissues and peripheral blood lymphocytes. Expressed in CD34(+) hematopoietic progenitor cells and during monocyte and granulocyte differentiation. Overexpressed in acute myeloid leukemia, in particular in those displaying granulocytic differentiation (at protein level).

The protein localises to the membrane. It localises to the golgi apparatus. Its subcellular location is the early endosome. Functionally, associates with proteins harboring glycine-rich transmembrane domains and ensures their efficient localization to the cell surface. Regulates the assembly and activity of V-ATPase in colon cancer cells via its interaction with V-type proton ATPase subunit H (ATP6V1H) and contributes to V-ATPase-mediated pH alterations in cancer cells which play an important role in drug resistance and invasiveness of colon cancer cells. Plays an important role in an atypical phagocytic activity of metastatic melanoma cells called cannibalism and is involved in the pH regulation of the intracellular vesicles in tumor cells. This Homo sapiens (Human) protein is Transmembrane 9 superfamily member 4 (TM9SF4).